The chain runs to 92 residues: SPbeta prophage-derived DNA-binding protein HU 2 (92 aa).

Thr4 carries the phosphothreonine modification. The tract at residues 55 to 77 (RAARKGRNPQTGEEIDIPATKAP) is disordered.

This sequence belongs to the bacterial histone-like protein family. Homodimer.

Functionally, histone-like DNA-binding protein which is capable of wrapping DNA to stabilize it, and thus to prevent its denaturation under extreme environmental conditions. In Bacillus subtilis (strain 168), this protein is SPbeta prophage-derived DNA-binding protein HU 2 (hup2).